Consider the following 377-residue polypeptide: D-alanine--D-alanine ligase (377 aa).

The 210-residue stretch at 140–349 folds into the ATP-grasp domain; the sequence is KELLTVNGIR…NAKLVDMLID (210 aa). Position 170–225 (170–225) interacts with ATP; the sequence is VAELGNIVFVKAANQGSSVGISRVTNAEEYTEALSDSFQYDYKVLIEEAVNGAREL. Positions 303, 316, and 318 each coordinate Mg(2+).

The protein belongs to the D-alanine--D-alanine ligase family. Requires Mg(2+) as cofactor. Mn(2+) serves as cofactor.

The protein resides in the cytoplasm. The enzyme catalyses 2 D-alanine + ATP = D-alanyl-D-alanine + ADP + phosphate + H(+). The protein operates within cell wall biogenesis; peptidoglycan biosynthesis. In terms of biological role, cell wall formation. The sequence is that of D-alanine--D-alanine ligase from Leuconostoc mesenteroides.